Consider the following 734-residue polypeptide: Myb-like protein J (734 aa).

Disordered regions lie at residues 1–35, 128–196, and 221–378; these read MPNN…FKSN, QKDQ…PTMM, and SPIS…LKQG. Basic and acidic residues predominate over residues 131–142; the sequence is QQQKEQQKEQQK. Residues 164–173 show a composition bias toward low complexity; sequence TTTTTTTTTT. Polar residues predominate over residues 174 to 196; it reads AVEQQGAEQQDTNLNSTSSPTMM. Residues 221-230 are compositionally biased toward low complexity; it reads SPISSSLNNS. The span at 231 to 257 shows a compositional bias: polar residues; the sequence is QDNTKPVSPDNIENTSNPMDTSSSNGK. Low complexity predominate over residues 258 to 372; that stretch reads TPTITPIVTP…GGKTNPTGKK (115 aa). The region spanning 371 to 426 is the HTH myb-type domain; the sequence is KKTSLKQGWTKEEHIRFLNGIQIHGKGAWKEIAQFVGTRTPTQIQSHAQKYYLRQK. A DNA-binding region (H-T-H motif) is located at residues 399–422; it reads WKEIAQFVGTRTPTQIQSHAQKYY. Over residues 445–454 the composition is skewed to low complexity; sequence DDNLNNSNKN. The tract at residues 445–623 is disordered; that stretch reads DDNLNNSNKN…GNILRHQNSH (179 aa). The span at 455–468 shows a compositional bias: basic and acidic residues; it reads NVDKNKQDDKEKKT. The span at 469–478 shows a compositional bias: basic residues; the sequence is QKTKKTKSKS. Composition is skewed to low complexity over residues 489–543 and 574–615; these read QQQQ…SSQT and NNNN…NEGN.

Its subcellular location is the nucleus. This Dictyostelium discoideum (Social amoeba) protein is Myb-like protein J (mybJ).